Consider the following 338-residue polypeptide: Acetylcholinesterase (338 aa).

A glycan (N-linked (GlcNAc...) asparagine) is linked at asparagine 8. Serine 99 serves as the catalytic Acyl-ester intermediate. A disulfide bridge links cysteine 153 with cysteine 164. The active-site Charge relay system is glutamate 226.

The protein belongs to the type-B carboxylesterase/lipase family.

It localises to the synapse. The protein resides in the secreted. The protein localises to the cell membrane. The enzyme catalyses acetylcholine + H2O = choline + acetate + H(+). Functionally, terminates signal transduction at the neuromuscular junction by rapid hydrolysis of the acetylcholine released into the synaptic cleft. The polypeptide is Acetylcholinesterase (ache) (Myxine glutinosa (Atlantic hagfish)).